The chain runs to 302 residues: Nucleotide-binding protein Strop_3101 (302 aa).

Position 26–33 (26–33 (GVSGGGRS)) interacts with ATP. 77 to 80 (DVRS) provides a ligand contact to GTP.

The protein belongs to the RapZ-like family.

In terms of biological role, displays ATPase and GTPase activities. This is Nucleotide-binding protein Strop_3101 from Salinispora tropica (strain ATCC BAA-916 / DSM 44818 / JCM 13857 / NBRC 105044 / CNB-440).